A 398-amino-acid chain; its full sequence is MLSVAELTRGLSDLVEDRYDDVWVEGELSDFTRAASGHCYFSLKDEDAQIRCVMWKHLTQYVYFEPEEGMQVRVNGHASVYERRGDLQIQAQAMRQAGKGAQQKAFEELKQTLQAEGLFAPERKQALPAFPDTIGVVTSGQGAAIHDIQSGLARRFPPAEVVLCPVKVQGLDAPRAVADAVAAFNDLPADDAQRPDLLIVGRGGGSTEDLWAFNEEVVARALDASNLPVVSAVGHESDVTIADLVADERAATPSAAAERVVPDRRDVADRVRALHDRLRSRVTGRLQDARQRVDALVASRAFHAPARRLEQHRQHLDALVDRLGRGGARAVDRARTRLAHLRDRLHALDPEQPLRRGYVHLTQDGTSVQSAESLQDGDRVRLHFQDGRRDAEVLPDDG.

It belongs to the XseA family. Heterooligomer composed of large and small subunits.

The protein resides in the cytoplasm. It carries out the reaction Exonucleolytic cleavage in either 5'- to 3'- or 3'- to 5'-direction to yield nucleoside 5'-phosphates.. Functionally, bidirectionally degrades single-stranded DNA into large acid-insoluble oligonucleotides, which are then degraded further into small acid-soluble oligonucleotides. The chain is Exodeoxyribonuclease 7 large subunit from Salinibacter ruber (strain DSM 13855 / M31).